The following is a 202-amino-acid chain: Protein-methionine-sulfoxide reductase heme-binding subunit MsrQ (202 aa).

Transmembrane regions (helical) follow at residues 8 to 28, 42 to 62, 75 to 95, 110 to 130, 147 to 167, and 169 to 189; these read LAVF…AWIF, LGLG…LQKL, LGLW…VFIL, PYII…ITSN, LVYL…RADL, and EWTL…PSIA.

Belongs to the MsrQ family. As to quaternary structure, heterodimer of a catalytic subunit (MsrP) and a heme-binding subunit (MsrQ). Requires FMN as cofactor. The cofactor is heme b.

It localises to the cell inner membrane. Part of the MsrPQ system that repairs oxidized periplasmic proteins containing methionine sulfoxide residues (Met-O), using respiratory chain electrons. Thus protects these proteins from oxidative-stress damage caused by reactive species of oxygen and chlorine generated by the host defense mechanisms. MsrPQ is essential for the maintenance of envelope integrity under bleach stress, rescuing a wide series of structurally unrelated periplasmic proteins from methionine oxidation. MsrQ provides electrons for reduction to the reductase catalytic subunit MsrP, using the quinone pool of the respiratory chain. In Pseudomonas aeruginosa (strain LESB58), this protein is Protein-methionine-sulfoxide reductase heme-binding subunit MsrQ.